The chain runs to 723 residues: Polyribonucleotide nucleotidyltransferase (723 aa).

Mg(2+) is bound by residues aspartate 488 and aspartate 494. A KH domain is found at 555-614 (PKIITLNIKPEKIKDVIGPGGKQINAIIEETGVKIDIEQDGTVYIASQDQAMNRKAIAII). Positions 624 to 692 (GEVYTGKVRR…HQGRVNLSRK (69 aa)) constitute an S1 motif domain. The segment at 692 to 723 (KALLEKKEQPEGDKKPQAEKKFYPKTKKPESK) is disordered. Basic and acidic residues predominate over residues 693–723 (ALLEKKEQPEGDKKPQAEKKFYPKTKKPESK).

Belongs to the polyribonucleotide nucleotidyltransferase family. It depends on Mg(2+) as a cofactor.

The protein localises to the cytoplasm. The enzyme catalyses RNA(n+1) + phosphate = RNA(n) + a ribonucleoside 5'-diphosphate. Its function is as follows. Involved in mRNA degradation. Catalyzes the phosphorolysis of single-stranded polyribonucleotides processively in the 3'- to 5'-direction. The protein is Polyribonucleotide nucleotidyltransferase of Listeria innocua serovar 6a (strain ATCC BAA-680 / CLIP 11262).